We begin with the raw amino-acid sequence, 140 residues long: Nucleoside diphosphate kinase (140 aa).

ATP-binding residues include lysine 11, phenylalanine 59, arginine 87, threonine 93, arginine 104, and asparagine 114. Catalysis depends on histidine 117, which acts as the Pros-phosphohistidine intermediate.

It belongs to the NDK family. In terms of assembly, homotetramer. Mg(2+) is required as a cofactor.

The protein localises to the cytoplasm. The catalysed reaction is a 2'-deoxyribonucleoside 5'-diphosphate + ATP = a 2'-deoxyribonucleoside 5'-triphosphate + ADP. The enzyme catalyses a ribonucleoside 5'-diphosphate + ATP = a ribonucleoside 5'-triphosphate + ADP. In terms of biological role, major role in the synthesis of nucleoside triphosphates other than ATP. The ATP gamma phosphate is transferred to the NDP beta phosphate via a ping-pong mechanism, using a phosphorylated active-site intermediate. The polypeptide is Nucleoside diphosphate kinase (Rickettsia peacockii (strain Rustic)).